Consider the following 295-residue polypeptide: Protease HtpX (295 aa).

The next 2 membrane-spanning stretches (helical) occupy residues 4 to 24 (ILLF…TLSL) and 41 to 61 (SSLL…SLFI). A Zn(2+)-binding site is contributed by H147. The active site involves E148. Residue H151 participates in Zn(2+) binding. 2 consecutive transmembrane segments (helical) span residues 158–178 (VTLA…ARII) and 199–219 (VATI…VMWF). Residue E224 coordinates Zn(2+).

This sequence belongs to the peptidase M48B family. Zn(2+) serves as cofactor.

The protein localises to the cell inner membrane. This Pseudomonas putida (strain ATCC 700007 / DSM 6899 / JCM 31910 / BCRC 17059 / LMG 24140 / F1) protein is Protease HtpX.